The following is a 41-amino-acid chain: Cytochrome b559 subunit beta (41 aa).

A helical transmembrane segment spans residues 16–32 (WLAVHALAIPTVFFLGS). H20 serves as a coordination point for heme.

The protein belongs to the PsbE/PsbF family. Heterodimer of an alpha subunit and a beta subunit. PSII is composed of 1 copy each of membrane proteins PsbA, PsbB, PsbC, PsbD, PsbE, PsbF, PsbH, PsbI, PsbJ, PsbK, PsbL, PsbM, PsbT, PsbY, PsbZ, Psb30/Ycf12, at least 3 peripheral proteins of the oxygen-evolving complex and a large number of cofactors. It forms dimeric complexes. Heme b serves as cofactor.

The protein resides in the plastid. It localises to the chloroplast thylakoid membrane. In terms of biological role, this b-type cytochrome is tightly associated with the reaction center of photosystem II (PSII). PSII is a light-driven water:plastoquinone oxidoreductase that uses light energy to abstract electrons from H(2)O, generating O(2) and a proton gradient subsequently used for ATP formation. It consists of a core antenna complex that captures photons, and an electron transfer chain that converts photonic excitation into a charge separation. The protein is Cytochrome b559 subunit beta of Euglena gracilis.